The primary structure comprises 252 residues: uncharacterized protein (252 aa).

Residues 106–140 (IQSLHARRDHLDNAVEQLKSQLSRLDSSVAILKSQ) adopt a coiled-coil conformation.

This is an uncharacterized protein from Caenorhabditis elegans.